A 955-amino-acid chain; its full sequence is Iron-responsive element-binding protein 2 (955 aa).

Residues C504, C570, and C573 each coordinate [4Fe-4S] cluster.

It belongs to the aconitase/IPM isomerase family. [4Fe-4S] cluster is required as a cofactor. Ubiquitinated and degraded by the proteasome in presence of high level of iron and oxygen.

Its subcellular location is the cytoplasm. Functionally, RNA-binding protein that binds to iron-responsive elements (IRES), which are stem-loop structures found in the 5'-UTR of ferritin, and delta aminolevulinic acid synthase mRNAs, and in the 3'-UTR of transferrin receptor mRNA. Binding to the IRE element in ferritin results in the repression of its mRNA translation. Binding of the protein to the transferrin receptor mRNA inhibits the degradation of this otherwise rapidly degraded mRNA. This is Iron-responsive element-binding protein 2 (ireb2) from Xenopus laevis (African clawed frog).